The primary structure comprises 444 residues: Exodeoxyribonuclease 7 large subunit (444 aa).

The protein belongs to the XseA family. As to quaternary structure, heterooligomer composed of large and small subunits.

It is found in the cytoplasm. The enzyme catalyses Exonucleolytic cleavage in either 5'- to 3'- or 3'- to 5'-direction to yield nucleoside 5'-phosphates.. Its function is as follows. Bidirectionally degrades single-stranded DNA into large acid-insoluble oligonucleotides, which are then degraded further into small acid-soluble oligonucleotides. This is Exodeoxyribonuclease 7 large subunit from Hahella chejuensis (strain KCTC 2396).